We begin with the raw amino-acid sequence, 343 residues long: Leucine-rich repeat-containing protein 39 (343 aa).

10 LRR repeats span residues Glu-64–Leu-87, Ser-88–Phe-110, Gln-111–Leu-133, Thr-134–Cys-156, Asn-158–Leu-180, Lys-181–Leu-203, Pro-204–Met-226, Lys-228–Met-249, Lys-250–Asn-274, and Leu-275–Asn-295.

The protein localises to the cytoplasm. Its subcellular location is the myofibril. The protein resides in the sarcomere. It localises to the m line. In terms of biological role, component of the sarcomeric M-band which plays a role in myocyte response to biomechanical stress. May regulate expression of other M-band proteins via an SRF-dependent pathway. Important for normal contractile function in heart. This is Leucine-rich repeat-containing protein 39 from Danio rerio (Zebrafish).